The chain runs to 293 residues: Ribosomal protein L11 methyltransferase (293 aa).

S-adenosyl-L-methionine is bound by residues Thr145, Gly166, Asp188, and Asn230.

The protein belongs to the methyltransferase superfamily. PrmA family.

It localises to the cytoplasm. The enzyme catalyses L-lysyl-[protein] + 3 S-adenosyl-L-methionine = N(6),N(6),N(6)-trimethyl-L-lysyl-[protein] + 3 S-adenosyl-L-homocysteine + 3 H(+). In terms of biological role, methylates ribosomal protein L11. The protein is Ribosomal protein L11 methyltransferase of Shewanella denitrificans (strain OS217 / ATCC BAA-1090 / DSM 15013).